The following is a 284-amino-acid chain: MKLCDFEVGLDKPFFLIAGTCVVESEQMTIDTAGRLKEICAKLNIPFIYKSSYDKANRSSGKSFRGLGMDEGLRILSEVKRQLGLPVLTDVHSIDEIEQVASVVDVLQTPAFLCRQTDFIHACARSGKPVNIKKGQFLAPHDMKNVIDKARDAAREAGLSEDRFMACERGVSFGYNNLVSDMRSLAIMRETNAPVVFDATHSVQLPGGQGTSSGGQREFVPVLARAAVATGVAGLFMETHPNPAEAKSDGPNAVPLNRMSALLETLVTLDQAVKRGPFLENDFN.

Belongs to the KdsA family.

The protein resides in the cytoplasm. It catalyses the reaction D-arabinose 5-phosphate + phosphoenolpyruvate + H2O = 3-deoxy-alpha-D-manno-2-octulosonate-8-phosphate + phosphate. It functions in the pathway carbohydrate biosynthesis; 3-deoxy-D-manno-octulosonate biosynthesis; 3-deoxy-D-manno-octulosonate from D-ribulose 5-phosphate: step 2/3. The protein operates within bacterial outer membrane biogenesis; lipopolysaccharide biosynthesis. The sequence is that of 2-dehydro-3-deoxyphosphooctonate aldolase from Burkholderia multivorans (strain ATCC 17616 / 249).